We begin with the raw amino-acid sequence, 337 residues long: Phosphate acyltransferase (337 aa).

This sequence belongs to the PlsX family. As to quaternary structure, homodimer. Probably interacts with PlsY.

The protein resides in the cytoplasm. The catalysed reaction is a fatty acyl-[ACP] + phosphate = an acyl phosphate + holo-[ACP]. Its pathway is lipid metabolism; phospholipid metabolism. In terms of biological role, catalyzes the reversible formation of acyl-phosphate (acyl-PO(4)) from acyl-[acyl-carrier-protein] (acyl-ACP). This enzyme utilizes acyl-ACP as fatty acyl donor, but not acyl-CoA. In Polynucleobacter asymbioticus (strain DSM 18221 / CIP 109841 / QLW-P1DMWA-1) (Polynucleobacter necessarius subsp. asymbioticus), this protein is Phosphate acyltransferase.